The primary structure comprises 161 residues: Phosphopantetheine adenylyltransferase (161 aa).

S9 contributes to the substrate binding site. ATP is bound by residues 9–10 and H17; that span reads SF. Substrate-binding residues include K41, L73, and K87. ATP-binding positions include 88-90, E98, and 123-129; these read GLR and YSYLSSS.

This sequence belongs to the bacterial CoaD family. Homohexamer. It depends on Mg(2+) as a cofactor.

The protein resides in the cytoplasm. It carries out the reaction (R)-4'-phosphopantetheine + ATP + H(+) = 3'-dephospho-CoA + diphosphate. It functions in the pathway cofactor biosynthesis; coenzyme A biosynthesis; CoA from (R)-pantothenate: step 4/5. Functionally, reversibly transfers an adenylyl group from ATP to 4'-phosphopantetheine, yielding dephospho-CoA (dPCoA) and pyrophosphate. This chain is Phosphopantetheine adenylyltransferase, found in Clostridium novyi (strain NT).